The primary structure comprises 553 residues: Putative transport protein YidE (553 aa).

The next 5 membrane-spanning stretches (helical) occupy residues 4–24 (IALTVSILALVAVVGLFIGNV), 28–48 (GIGLGIGGVLFGGIIVGHFVS), 65–85 (FGLILFVYTIGIQVGPGFFAS), 95–115 (LFAVLIVIIGGLVTAILHKLF), and 158–178 (MSYAMAYPFGICGILFTMWML). RCK C-terminal domains follow at residues 191–276 (QQHE…VIGQ) and 279–361 (DTSL…VLGN). A run of 6 helical transmembrane segments spans residues 371–391 (MLPVFIGIGLGVLLGSIPVFV), 393–413 (GFPAALKLGLAGGPLIMALIL), 439–459 (IVLFLSVVGLKSGGDFVNTLV), 464–484 (LSWIGYGALITAVPLITVGIL), 493–513 (YLTMCGMLAGSMTDPPALAFA), and 533–553 (LVMFLRIITPQLLAVLFWSIG).

The protein belongs to the AAE transporter (TC 2.A.81) family. YidE subfamily.

The protein localises to the cell membrane. The sequence is that of Putative transport protein YidE from Shigella boydii serotype 18 (strain CDC 3083-94 / BS512).